Reading from the N-terminus, the 312-residue chain is 4-diphosphocytidyl-2-C-methyl-D-erythritol kinase (312 aa).

Residue Lys-16 is part of the active site. 101–111 is a binding site for ATP; sequence PIGAGLAGGSS. The active site involves Asp-143.

This sequence belongs to the GHMP kinase family. IspE subfamily.

It catalyses the reaction 4-CDP-2-C-methyl-D-erythritol + ATP = 4-CDP-2-C-methyl-D-erythritol 2-phosphate + ADP + H(+). The protein operates within isoprenoid biosynthesis; isopentenyl diphosphate biosynthesis via DXP pathway; isopentenyl diphosphate from 1-deoxy-D-xylulose 5-phosphate: step 3/6. Catalyzes the phosphorylation of the position 2 hydroxy group of 4-diphosphocytidyl-2C-methyl-D-erythritol. This is 4-diphosphocytidyl-2-C-methyl-D-erythritol kinase from Prochlorococcus marinus subsp. pastoris (strain CCMP1986 / NIES-2087 / MED4).